A 333-amino-acid polypeptide reads, in one-letter code: 5-formaminoimidazole-4-carboxamide-1-(beta)-D-ribofuranosyl 5'-monophosphate synthetase (333 aa).

5-amino-1-(5-phospho-beta-D-ribosyl)imidazole-4-carboxamide contacts are provided by histidine 10 and serine 70. The ATP-grasp domain maps to 91 to 324 (KEVLKWESDR…IAREIKIAIE (234 aa)). Residues 121–181 (PDDI…VPIY) and glutamate 203 contribute to the ATP site. Residue asparagine 231 coordinates 5-amino-1-(5-phospho-beta-D-ribosyl)imidazole-4-carboxamide. Mg(2+)-binding residues include glutamate 269 and glutamate 282.

Belongs to the phosphohexose mutase family. The cofactor is Mg(2+). It depends on Mn(2+) as a cofactor.

It carries out the reaction 5-amino-1-(5-phospho-beta-D-ribosyl)imidazole-4-carboxamide + formate + ATP = 5-formamido-1-(5-phospho-D-ribosyl)imidazole-4-carboxamide + ADP + phosphate. It participates in purine metabolism; IMP biosynthesis via de novo pathway; 5-formamido-1-(5-phospho-D-ribosyl)imidazole-4-carboxamide from 5-amino-1-(5-phospho-D-ribosyl)imidazole-4-carboxamide (formate route): step 1/1. Catalyzes the ATP- and formate-dependent formylation of 5-aminoimidazole-4-carboxamide-1-beta-d-ribofuranosyl 5'-monophosphate (AICAR) to 5-formaminoimidazole-4-carboxamide-1-beta-d-ribofuranosyl 5'-monophosphate (FAICAR) in the absence of folates. The protein is 5-formaminoimidazole-4-carboxamide-1-(beta)-D-ribofuranosyl 5'-monophosphate synthetase of Pyrococcus horikoshii (strain ATCC 700860 / DSM 12428 / JCM 9974 / NBRC 100139 / OT-3).